Reading from the N-terminus, the 431-residue chain is UDP-N-acetylmuramate--L-alanine ligase (431 aa).

108–114 (GSHGKTS) is a binding site for ATP.

The protein belongs to the MurCDEF family.

The protein resides in the cytoplasm. It catalyses the reaction UDP-N-acetyl-alpha-D-muramate + L-alanine + ATP = UDP-N-acetyl-alpha-D-muramoyl-L-alanine + ADP + phosphate + H(+). The protein operates within cell wall biogenesis; peptidoglycan biosynthesis. In terms of biological role, cell wall formation. The sequence is that of UDP-N-acetylmuramate--L-alanine ligase from Macrococcus caseolyticus (strain JCSC5402) (Macrococcoides caseolyticum).